Here is a 181-residue protein sequence, read N- to C-terminus: NAD(P)H-quinone oxidoreductase subunit I, chloroplastic (181 aa).

2 consecutive 4Fe-4S ferredoxin-type domains span residues 55 to 84 (GRIH…VDWE) and 95 to 124 (KNYS…MTEE). [4Fe-4S] cluster is bound by residues C64, C67, C70, C74, C104, C107, C110, and C114.

The protein belongs to the complex I 23 kDa subunit family. As to quaternary structure, NDH is composed of at least 16 different subunits, 5 of which are encoded in the nucleus. [4Fe-4S] cluster serves as cofactor.

Its subcellular location is the plastid. It localises to the chloroplast thylakoid membrane. The catalysed reaction is a plastoquinone + NADH + (n+1) H(+)(in) = a plastoquinol + NAD(+) + n H(+)(out). It catalyses the reaction a plastoquinone + NADPH + (n+1) H(+)(in) = a plastoquinol + NADP(+) + n H(+)(out). Its function is as follows. NDH shuttles electrons from NAD(P)H:plastoquinone, via FMN and iron-sulfur (Fe-S) centers, to quinones in the photosynthetic chain and possibly in a chloroplast respiratory chain. The immediate electron acceptor for the enzyme in this species is believed to be plastoquinone. Couples the redox reaction to proton translocation, and thus conserves the redox energy in a proton gradient. This chain is NAD(P)H-quinone oxidoreductase subunit I, chloroplastic, found in Angiopteris evecta (Mule's foot fern).